Here is a 257-residue protein sequence, read N- to C-terminus: MKPLVIKLGGVLLDTPAAMENLFTALADYQQNFARPLLIVHGGGCLVDDLMKRLNLPVQKKNGLRVTPADQIDIIVGALAGIANKTLVAQAAKFKLNPVGLCLADGNLTQATQFDPELGHVAMVVAKNPALLNNLLGDAFLPIISSIAVDDNGLLMNVNADQAATAIAALINADLVMLSDVDGVLDANKQRLTELNSAQIEQLIEDKVITDGMIVKVNAALDAAKILNCGVDIANWKYPEKLTALFAGEIIGTRINP.

Residues 43–44 (GG), Arg65, and Asn157 each bind substrate.

Belongs to the acetylglutamate kinase family. ArgB subfamily.

The protein resides in the cytoplasm. The catalysed reaction is N-acetyl-L-glutamate + ATP = N-acetyl-L-glutamyl 5-phosphate + ADP. Its pathway is amino-acid biosynthesis; L-arginine biosynthesis; N(2)-acetyl-L-ornithine from L-glutamate: step 2/4. Catalyzes the ATP-dependent phosphorylation of N-acetyl-L-glutamate. The chain is Acetylglutamate kinase from Mannheimia succiniciproducens (strain KCTC 0769BP / MBEL55E).